The chain runs to 460 residues: Orexin receptor type 2 (460 aa).

At 1 to 54 (MSSTKLEDSLSRRNWSSASELNETQEPFLNPTDYDDEEFLRYLWREYLHPKEYE) the chain is on the extracellular side. N-linked (GlcNAc...) asparagine glycans are attached at residues Asn-14 and Asn-22. The interval 33–49 (DYDDEEFLRYLWREYLH) is required for response to orexin-A. Residues 55 to 75 (WVLIAGYIIVFVVALIGNVLV) form a helical membrane-spanning segment. The Cytoplasmic portion of the chain corresponds to 76–88 (CVAVWKNHHMRTV). Residues 89–110 (TNYFIVNLSLADVLVTITCLPA) form a helical membrane-spanning segment. Topologically, residues 111 to 127 (TLVVDITETWFFGQSLC) are extracellular. An intrachain disulfide couples Cys-127 to Cys-210. A helical membrane pass occupies residues 128-150 (KVIPYLQTVSVSVSVLTLSCIAL). The Cytoplasmic portion of the chain corresponds to 151-170 (DRWYAICHPLMFKSTAKRAR). Residues 171–191 (NSIVVIWIVSCIIMIPQAIVM) traverse the membrane as a helical segment. The Extracellular segment spans residues 192-222 (ECSSMLPGLANKTTLFTVCDEHWGGEVYPKM). N-linked (GlcNAc...) asparagine glycosylation occurs at Asn-202. A helical transmembrane segment spans residues 223–243 (YHICFFLVTYMAPLCLMILAY). Residues 244-304 (LQIFRKLWCR…QIRARRKTAR (61 aa)) are Cytoplasmic-facing. A helical membrane pass occupies residues 305 to 326 (MLMVVLLVFAICYLPISILNVL). The Extracellular portion of the chain corresponds to 327 to 342 (KRVFGMFTHTEDRETV). Residues 343 to 366 (YAWFTFSHWLVYANSAANPIIYNF) traverse the membrane as a helical segment. The Cytoplasmic segment spans residues 367–460 (LSGKFREEFK…SSLLSTWLEV (94 aa)).

It belongs to the G-protein coupled receptor 1 family. In terms of tissue distribution, widely expressed. Isoform 2 not detected in skeletal muscle and kidney.

It localises to the cell membrane. Nonselective, high-affinity receptor for both orexin-A and orexin-B neuropeptides. Triggers an increase in cytoplasmic Ca(2+) levels in response to orexin-A binding. This chain is Orexin receptor type 2 (Hcrtr2), found in Mus musculus (Mouse).